A 1170-amino-acid polypeptide reads, in one-letter code: Disease resistance protein LAZ5 (1170 aa).

The TIR domain occupies 10–172 (ESWQVFINFR…KIIDSIKKVL (163 aa)). Glu84 is a catalytic residue. The segment at 193–219 (EAKNVDTFSPNSSDFPSTSIDDDLSIN) is disordered. Positions 198–219 (DTFSPNSSDFPSTSIDDDLSIN) are enriched in polar residues. One can recognise an NB-ARC domain in the interval 261 to 513 (RLKEMEEKLD…DVACFFKSEN (253 aa)). LRR repeat units follow at residues 595-616 (MENV…TFDG), 622-645 (MCNL…IFKF), 646-670 (DTVR…PWEK), 677-700 (PENL…VKDT), 723-747 (AKNL…MENM), 761-785 (LTCL…KLEE), 790-813 (SENL…AGDL), 815-837 (RLVV…LGKQ), 838-861 (KALQ…VKDM), 862-885 (KHLR…SLKC), 888-904 (LSRN…LKDF), and 905-930 (SNLK…CLEY).

The enzyme catalyses NAD(+) + H2O = ADP-D-ribose + nicotinamide + H(+). TIR-NB-LRR receptor-like protein that may play a role in plant innate immunity. May trigger hypersensitive programmed cell death in response to pathogen attack. Involved in tolerance to tobacco ringspot virus (TRSV). In Arabidopsis thaliana (Mouse-ear cress), this protein is Disease resistance protein LAZ5.